A 249-amino-acid chain; its full sequence is Protein ZPS1 (249 aa).

The signal sequence occupies residues 1 to 20 (MKFSSGKSIIFATIASLALS). N-linked (GlcNAc...) asparagine glycans are attached at residues N28, N57, N98, and N217.

Belongs to the ZPS1 family.

This chain is Protein ZPS1 (ZPS1), found in Saccharomyces cerevisiae (strain ATCC 204508 / S288c) (Baker's yeast).